The primary structure comprises 500 residues: Cytochrome P450 2D4 (500 aa).

A heme-binding site is contributed by C446.

Belongs to the cytochrome P450 family. Heme serves as cofactor. As to expression, brain.

It localises to the endoplasmic reticulum membrane. The protein resides in the microsome membrane. It catalyses the reaction an organic molecule + reduced [NADPH--hemoprotein reductase] + O2 = an alcohol + oxidized [NADPH--hemoprotein reductase] + H2O + H(+). Its function is as follows. Cytochromes P450 are a group of heme-thiolate monooxygenases. In liver microsomes, this enzyme is involved in an NADPH-dependent electron transport pathway. It oxidizes a variety of structurally unrelated compounds, including steroids, fatty acids, and xenobiotics. The polypeptide is Cytochrome P450 2D4 (Cyp2d4) (Rattus norvegicus (Rat)).